The following is a 113-amino-acid chain: Small ribosomal subunit protein uS17 (113 aa).

This sequence belongs to the universal ribosomal protein uS17 family. In terms of assembly, part of the 30S ribosomal subunit.

Functionally, one of the primary rRNA binding proteins, it binds specifically to the 5'-end of 16S ribosomal RNA. The protein is Small ribosomal subunit protein uS17 of Pyrococcus abyssi (strain GE5 / Orsay).